The sequence spans 430 residues: Adenylosuccinate synthetase (430 aa).

GTP contacts are provided by residues 12–18 and 40–42; these read GDEGKGK and GHT. Residue Asp-13 is the Proton acceptor of the active site. Mg(2+) is bound by residues Asp-13 and Gly-40. IMP-binding positions include 13-16, 38-41, Thr-130, Arg-144, Gln-224, Thr-239, and Arg-303; these read DEGK and NAGH. The active-site Proton donor is His-41. Position 299-305 (299-305) interacts with substrate; it reads VVTGRKR. Residues Arg-305, 331 to 333, and 413 to 415 each bind GTP; these read KLD and STS.

This sequence belongs to the adenylosuccinate synthetase family. Homodimer. Mg(2+) is required as a cofactor.

The protein localises to the cytoplasm. It catalyses the reaction IMP + L-aspartate + GTP = N(6)-(1,2-dicarboxyethyl)-AMP + GDP + phosphate + 2 H(+). The protein operates within purine metabolism; AMP biosynthesis via de novo pathway; AMP from IMP: step 1/2. Its function is as follows. Plays an important role in the de novo pathway of purine nucleotide biosynthesis. Catalyzes the first committed step in the biosynthesis of AMP from IMP. This Methylobacterium sp. (strain 4-46) protein is Adenylosuccinate synthetase.